The sequence spans 130 residues: Small ribosomal subunit protein uS9 (130 aa).

Positions 102-130 (GFLTRDPRMKERKKYGLKKARRAPQFSKR) are disordered. Over residues 111–130 (KERKKYGLKKARRAPQFSKR) the composition is skewed to basic residues.

The protein belongs to the universal ribosomal protein uS9 family.

In Clostridium novyi (strain NT), this protein is Small ribosomal subunit protein uS9.